We begin with the raw amino-acid sequence, 369 residues long: 3-isopropylmalate dehydrogenase (369 aa).

77 to 90 (GPKWDDLPFDKKPE) is an NAD(+) binding site. Residues Arg-97, Arg-107, Arg-135, and Asp-226 each coordinate substrate. Residues Asp-226, Asp-250, and Asp-254 each coordinate Mg(2+). Residue 289–301 (GSAPDIAGKDMAN) participates in NAD(+) binding.

This sequence belongs to the isocitrate and isopropylmalate dehydrogenases family. LeuB type 1 subfamily. As to quaternary structure, homodimer. Mg(2+) is required as a cofactor. Requires Mn(2+) as cofactor.

Its subcellular location is the cytoplasm. It catalyses the reaction (2R,3S)-3-isopropylmalate + NAD(+) = 4-methyl-2-oxopentanoate + CO2 + NADH. It participates in amino-acid biosynthesis; L-leucine biosynthesis; L-leucine from 3-methyl-2-oxobutanoate: step 3/4. Functionally, catalyzes the oxidation of 3-carboxy-2-hydroxy-4-methylpentanoate (3-isopropylmalate) to 3-carboxy-4-methyl-2-oxopentanoate. The product decarboxylates to 4-methyl-2 oxopentanoate. The sequence is that of 3-isopropylmalate dehydrogenase from Paramagnetospirillum magneticum (strain ATCC 700264 / AMB-1) (Magnetospirillum magneticum).